Reading from the N-terminus, the 276-residue chain is MLLSLVKFGILSVFLLAQEAVAIQLWNNTDGFSDDVPAAGRSALTFDVKCANYLVTARDVANGAALVGNLESHYCTEECHDSIDNFQRSSHLAYGTKAYALFKNSTARVVPGDIVNGLMWAYELSCIKDSTGYCLAGIYNHTKTACSECTLKYGAVMASSGYGRKQFPPNVFSSLLSSCNVPASSYTYVYTSSNPTTTPESSGVPSSATATPTSTCTGKTYIAKEDDTCKSISEAQSISTDRLVEVNHLDYSCSSLTSGTALCIEKNCTVYTVQAN.

The N-terminal stretch at 1-22 is a signal peptide; sequence MLLSLVKFGILSVFLLAQEAVA. N-linked (GlcNAc...) asparagine glycosylation is found at N27, N104, and N140. The region spanning 219-264 is the LysM domain; that stretch reads KTYIAKEDDTCKSISEAQSISTDRLVEVNHLDYSCSSLTSGTALCI. N267 is a glycosylation site (N-linked (GlcNAc...) asparagine).

This sequence belongs to the secreted LysM effector family.

The protein localises to the secreted. Functionally, secreted LysM effector that might have a role in sequestration of chitin oligosaccharides (breakdown products of fungal cell walls that are released during invasion and act as triggers of host immunity) to dampen host defense. The sequence is that of Secreted LysM effector LysM10 from Penicillium expansum (Blue mold rot fungus).